A 123-amino-acid chain; its full sequence is Probable ketoamine kinase in tonB 3'region (123 aa).

The active-site Proton acceptor is the aspartate 26.

Belongs to the fructosamine kinase family.

Functionally, ketoamine kinase that phosphorylates ketoamines on the third carbon of the sugar moiety to generate ketoamine 3-phosphate. The chain is Probable ketoamine kinase in tonB 3'region from Klebsiella pneumoniae.